The primary structure comprises 277 residues: MRPLQEKIVAYEHVLPEIDPKKEIRKSIDFLKDYLKENPFLKTYVLGISGGQDSTLTGKLCQMAIEEMREETGNKSYQFIAVRLPYGVQADASDAADAIAFQKPDQDLIVNIKEPVDAMVKVVEATGQKITDFNKGNIKARQRMVVQYAIAGANNGAVVGTDHAAENFSGFYTKYGDGAADITPLFRLDKRQGKAMLKELGCPKHLYEKAPTADLEEDRPDLPDEVALGVTYKDVDDYLEGKDVSEEAAEQIEKLWKKSEHKRHLPVTIFDDFYKQN.

47 to 54 contributes to the ATP binding site; it reads GISGGQDS. Asp-53 provides a ligand contact to Mg(2+). Arg-141 serves as a coordination point for deamido-NAD(+). Thr-161 serves as a coordination point for ATP. Glu-166 contacts Mg(2+). Positions 174 and 181 each coordinate deamido-NAD(+). Lys-190 and Thr-212 together coordinate ATP. 261–262 provides a ligand contact to deamido-NAD(+); that stretch reads HK.

This sequence belongs to the NAD synthetase family. As to quaternary structure, homodimer.

The catalysed reaction is deamido-NAD(+) + NH4(+) + ATP = AMP + diphosphate + NAD(+) + H(+). It functions in the pathway cofactor biosynthesis; NAD(+) biosynthesis; NAD(+) from deamido-NAD(+) (ammonia route): step 1/1. Catalyzes the ATP-dependent amidation of deamido-NAD to form NAD. Uses ammonia as a nitrogen source. This Lactobacillus johnsonii (strain CNCM I-12250 / La1 / NCC 533) protein is NH(3)-dependent NAD(+) synthetase.